The sequence spans 112 residues: Cell cycle protein GpsB (112 aa).

The stretch at 38–72 forms a coiled coil; sequence IKDYEAFHKEFEQLKQQNARLKRELEEQKLAATQV.

This sequence belongs to the GpsB family. Forms polymers through the coiled coil domains. Interacts with PBP1, MreC and EzrA.

It localises to the cytoplasm. Its function is as follows. Divisome component that associates with the complex late in its assembly, after the Z-ring is formed, and is dependent on DivIC and PBP2B for its recruitment to the divisome. Together with EzrA, is a key component of the system that regulates PBP1 localization during cell cycle progression. Its main role could be the removal of PBP1 from the cell pole after pole maturation is completed. Also contributes to the recruitment of PBP1 to the division complex. Not essential for septum formation. This is Cell cycle protein GpsB from Bacillus anthracis (strain A0248).